A 102-amino-acid chain; its full sequence is Small ribosomal subunit protein uS10 (102 aa).

This sequence belongs to the universal ribosomal protein uS10 family. Part of the 30S ribosomal subunit.

Its function is as follows. Involved in the binding of tRNA to the ribosomes. The polypeptide is Small ribosomal subunit protein uS10 (Phenylobacterium zucineum (strain HLK1)).